A 588-amino-acid polypeptide reads, in one-letter code: Zinc finger protein 599 (588 aa).

One can recognise a KRAB domain in the interval 9 to 80 (VSFEDVVVTF…KRGLSQSTCA (72 aa)). C2H2-type zinc fingers lie at residues 199 to 221 (YTCT…QQIH), 227 to 249 (YECN…MRLH), 255 to 277 (YKCI…QRIH), 283 to 305 (YECK…NMTH), 311 to 333 (FLCK…MRIH), 339 to 361 (YECG…NVTH), 367 to 389 (FLCK…MRIH), 395 to 417 (YECG…KRTH), 423 to 445 (FECK…MRIH), 451 to 473 (YECS…NRTH), 479 to 501 (LECK…MRIH), 507 to 529 (YVCR…NRIH), 535 to 557 (FECK…MRTH), and 563 to 585 (FECN…RKIH).

The protein belongs to the krueppel C2H2-type zinc-finger protein family.

The protein localises to the nucleus. Its function is as follows. May be involved in transcriptional regulation. The polypeptide is Zinc finger protein 599 (ZNF599) (Homo sapiens (Human)).